The sequence spans 639 residues: Polyphenol oxidase, chloroplastic (639 aa).

A chloroplast-targeting transit peptide spans 1–101; that stretch reads MATLSSPTII…EGANYYNTLA (101 aa). Residues 35–58 are disordered; the sequence is GVRSVNGKVSCQTKNNNGNDENNQ. 2 disulfides stabilise this stretch: Cys111–Cys127 and Cys126–Cys194. Cu cation-binding residues include His193, His214, His223, His354, His358, and His388. The 2'-(S-cysteinyl)-histidine (Cys-His) cross-link spans 197–214; the sequence is CDGSYPVLGHNDTRLEVH.

It belongs to the tyrosinase family. It depends on Cu(2+) as a cofactor.

It localises to the plastid. The protein resides in the chloroplast thylakoid lumen. It carries out the reaction 2 catechol + O2 = 2 1,2-benzoquinone + 2 H2O. Catalyzes the oxidation of mono- and o-diphenols to o-diquinones. This is Polyphenol oxidase, chloroplastic from Spinacia oleracea (Spinach).